The primary structure comprises 780 residues: ATP-dependent DNA helicase RecG (780 aa).

3 domain regions span residues 1-350, 351-549, and 550-780; these read MLCS…GGIP, KKIE…EMPP, and GRKE…IEVG. The segment at 154-252 is wedge domain; it reads RKIFKLNDLL…VTPKEGEYVR (99 aa). Phe-367, Leu-369, Gly-399, Ser-400, Gly-401, Lys-402, Thr-403, and Arg-436 together coordinate ATP. In terms of domain architecture, Helicase ATP-binding spans 383 to 544; the sequence is DMISEKPMNR…FYGDLDVTVI (162 aa). Residues 497–500 carry the DEAH box motif; sequence DEQH. The region spanning 563-728 is the Helicase C-terminal domain; that stretch reads RVNEVYEFVR…EYDLKTRGPG (166 aa).

This sequence belongs to the helicase family. RecG subfamily. Monomer.

It catalyses the reaction Couples ATP hydrolysis with the unwinding of duplex DNA by translocating in the 3'-5' direction.. The enzyme catalyses ATP + H2O = ADP + phosphate + H(+). In terms of biological role, plays a critical role in recombination and DNA repair. Helps process Holliday junction intermediates to mature products by catalyzing branch migration. Has replication fork (Y-DNA) regression activity, unwinds stalled or blocked replication forks to make a HJ that can be resolved. Has a DNA unwinding activity characteristic of a DNA helicase with 3'-5' polarity. Might be a DNA translocase rather than a bona fide helicase. The protein is ATP-dependent DNA helicase RecG of Thermotoga maritima (strain ATCC 43589 / DSM 3109 / JCM 10099 / NBRC 100826 / MSB8).